A 174-amino-acid chain; its full sequence is Large ribosomal subunit protein uL22 (174 aa).

This sequence belongs to the universal ribosomal protein uL22 family. In terms of assembly, part of the 50S ribosomal subunit.

This protein binds specifically to 23S rRNA. It makes multiple contacts with different domains of the 23S rRNA in the assembled 50S subunit and ribosome. Its function is as follows. The globular domain of the protein is located near the polypeptide exit tunnel on the outside of the subunit, while an extended beta-hairpin is found that lines the wall of the exit tunnel in the center of the 70S ribosome. The polypeptide is Large ribosomal subunit protein uL22 (Nanoarchaeum equitans (strain Kin4-M)).